Consider the following 302-residue polypeptide: HTH-type transcriptional regulator GbpR (302 aa).

An HTH lysR-type domain is found at 1 to 56; that stretch reads MSHLRMLVMIEEHGQVSAAAAAMNMTQPAASRMLSEMEAIVKSPLCQRASRGVVLT. The H-T-H motif DNA-binding region spans 16-35; it reads VSAAAAAMNMTQPAASRMLS.

The protein belongs to the LysR transcriptional regulatory family.

Activator of the expression of chvE when bound to its inducer and represses its expression in the absence of inducer (L-arabinose, D-fucose or D-galactose). Negatively regulates its own expression. This is HTH-type transcriptional regulator GbpR (gbpR) from Rhizobium radiobacter (Agrobacterium tumefaciens).